A 470-amino-acid chain; its full sequence is Phosphoribosylamine--glycine ligase (470 aa).

The ATP-grasp domain occupies Lys115–Glu354. Arg142–Ala203 contributes to the ATP binding site. Mg(2+)-binding residues include Glu324 and Asn326.

It belongs to the GARS family. Mg(2+) is required as a cofactor. Mn(2+) serves as cofactor.

It carries out the reaction 5-phospho-beta-D-ribosylamine + glycine + ATP = N(1)-(5-phospho-beta-D-ribosyl)glycinamide + ADP + phosphate + H(+). It participates in purine metabolism; IMP biosynthesis via de novo pathway; N(1)-(5-phospho-D-ribosyl)glycinamide from 5-phospho-alpha-D-ribose 1-diphosphate: step 2/2. This chain is Phosphoribosylamine--glycine ligase (purD), found in Archaeoglobus fulgidus (strain ATCC 49558 / DSM 4304 / JCM 9628 / NBRC 100126 / VC-16).